Here is a 352-residue protein sequence, read N- to C-terminus: MDYQVSSPTYDIDYNTSEPCQKINVKQIAARLLPLLYSLVFIFGFVGNILVVLILINCKRLKSMTDIYLLNLAISDLLFLLTVPFWAHYAAAQWDFGNTMCQLLTGLYFIGFFSGIFFIILLTIDRYLAIVHAVFALKARTVTFGVVTSVITWVVAVFASLPRIIFTRSQREGLHYTCSSHFPYSQYQFWKNFQTLKIVILGLVLPLLVMVICYSGILKTLLRCRNEKKRHRAVRLIFTIMIVYFLFWAPYNIVLLLNTFQEFFGLNNCSSSNRLDQAMQVTETLGMTHCCINPIIYAFVGEKFRNYLLVFFQKHIAKRFCKCCSIFQQEAPERASSVYTRSTGEQEISVGL.

The Extracellular portion of the chain corresponds to 1–30 (MDYQVSSPTYDIDYNTSEPCQKINVKQIAA). Tyr3 is subject to Sulfotyrosine. 2 O-linked (GalNAc...) serine glycosylation sites follow: Ser6 and Ser7. Tyr10 and Tyr14 each carry sulfotyrosine. 2 disulfide bridges follow: Cys20-Cys269 and Cys101-Cys178. A helical transmembrane segment spans residues 31–58 (RLLPLLYSLVFIFGFVGNILVVLILINC). Residues 59–68 (KRLKSMTDIY) are Cytoplasmic-facing. The chain crosses the membrane as a helical span at residues 69–89 (LLNLAISDLLFLLTVPFWAHY). Residues 90–102 (AAAQWDFGNTMCQ) are Extracellular-facing. Residues 103–124 (LLTGLYFIGFFSGIFFIILLTI) traverse the membrane as a helical segment. Residues 125-141 (DRYLAIVHAVFALKART) lie on the Cytoplasmic side of the membrane. A helical membrane pass occupies residues 142–166 (VTFGVVTSVITWVVAVFASLPRIIF). Topologically, residues 167–198 (TRSQREGLHYTCSSHFPYSQYQFWKNFQTLKI) are extracellular. A helical transmembrane segment spans residues 199–218 (VILGLVLPLLVMVICYSGIL). Over 219 to 235 (KTLLRCRNEKKRHRAVR) the chain is Cytoplasmic. A helical membrane pass occupies residues 236-260 (LIFTIMIVYFLFWAPYNIVLLLNTF). The Extracellular segment spans residues 261 to 277 (QEFFGLNNCSSSNRLDQ). The chain crosses the membrane as a helical span at residues 278–301 (AMQVTETLGMTHCCINPIIYAFVG). Residues 302–352 (EKFRNYLLVFFQKHIAKRFCKCCSIFQQEAPERASSVYTRSTGEQEISVGL) lie on the Cytoplasmic side of the membrane. Residues Cys321, Cys323, and Cys324 are each lipidated (S-palmitoyl cysteine). Residues Ser336, Ser337, Ser342, and Ser349 each carry the phosphoserine; by BARK1 modification.

It belongs to the G-protein coupled receptor 1 family. As to quaternary structure, interacts with PRAF2. Efficient ligand binding to CCL3/MIP-1alpha and CCL4/MIP-1beta requires sulfation, O-glycosylation and sialic acid modifications. Glycosylation on Ser-6 is required for efficient binding of CCL4. Interacts with GRK2. Interacts with ARRB1 and ARRB2. Interacts with CNIH4. Interacts with S100A4; this interaction stimulates T-lymphocyte chemotaxis. In terms of processing, sulfated on at least 2 of the N-terminal tyrosines. Sulfation is required for efficient binding of the chemokines, CCL3 and CCL4. Palmitoylation in the C-terminal is important for cell surface expression. Post-translationally, phosphorylation on serine residues in the C-terminal is stimulated by binding CC chemokines especially by APO-RANTES. In terms of processing, O-glycosylated, but not N-glycosylated. Ser-6 appears to be the major site even if Ser-7 may be also O-glycosylated. Also sialylated glycans present which contribute to chemokine binding. Thr-16 and Ser-17 may also be glycosylated and, if so, with small moieties such as a T-antigen.

The protein resides in the cell membrane. Its function is as follows. Receptor for a number of inflammatory CC-chemokines including CCL3/MIP-1-alpha, CCL4/MIP-1-beta and RANTES and subsequently transduces a signal by increasing the intracellular calcium ion level. May play a role in the control of granulocytic lineage proliferation or differentiation. Participates in T-lymphocyte migration to the infection site by acting as a chemotactic receptor. This Cercopithecus cephus (Moustached monkey) protein is C-C chemokine receptor type 5 (CCR5).